The sequence spans 161 residues: 3-hydroxyacyl-[acyl-carrier-protein] dehydratase FabZ (161 aa).

Residue histidine 64 is part of the active site.

This sequence belongs to the thioester dehydratase family. FabZ subfamily.

It localises to the cytoplasm. It catalyses the reaction a (3R)-hydroxyacyl-[ACP] = a (2E)-enoyl-[ACP] + H2O. Its function is as follows. Involved in unsaturated fatty acids biosynthesis. Catalyzes the dehydration of short chain beta-hydroxyacyl-ACPs and long chain saturated and unsaturated beta-hydroxyacyl-ACPs. The polypeptide is 3-hydroxyacyl-[acyl-carrier-protein] dehydratase FabZ (Paramagnetospirillum magneticum (strain ATCC 700264 / AMB-1) (Magnetospirillum magneticum)).